A 529-amino-acid polypeptide reads, in one-letter code: Zinc finger protein 572 (529 aa).

The interval 1-62 (MEQEKKLLVS…EWSKRHRPQH (62 aa)) is disordered. Residues lysine 5 and lysine 6 each participate in a glycyl lysine isopeptide (Lys-Gly) (interchain with G-Cter in SUMO2) cross-link. Polar residues predominate over residues 26-35 (TGDTSMNNLE). The span at 36-55 (TVHHNNSKADKLKEKPSEWS) shows a compositional bias: basic and acidic residues. C2H2-type zinc fingers lie at residues 132-154 (YKCSECWKSFSNSSHLRTHQRTH), 160-182 (YKCSECAKCFCNSSHLIQHLRMH), 188-210 (YQCGECGKSFSNTSHLIIHERTH), 216-238 (YKCPECGKRFSSSSHLIQHHRSH), 244-266 (YECSVCGKGFSHSYVLIEHQRTH), 272-294 (YKCPDCGKSFSQSSSLIRHQRTH), 300-322 (YKCLECEKSFGCNSTLIKHQRIH), 328-350 (YQCPECGKNFSRSSNLITHQKMH), 384-406 (YRCCECGKSFGLSSHLIRHQRTH), 412-434 (YRCSECWKTFSQSSTLVIHQRTH), 440-462 (YKCPDCGESFSQSFNLIRHRRTH), and 468-490 (YKCTSCEKCFSRSAYLSQHRKIH).

Belongs to the krueppel C2H2-type zinc-finger protein family.

It is found in the nucleus. Functionally, may be involved in transcriptional regulation. This Homo sapiens (Human) protein is Zinc finger protein 572 (ZNF572).